The chain runs to 150 residues: UPF0756 membrane protein PM0771 (150 aa).

Transmembrane regions (helical) follow at residues leucine 12 to leucine 34, histidine 52 to glycine 72, leucine 79 to tryptophan 99, and isoleucine 123 to leucine 143.

This sequence belongs to the UPF0756 family.

It localises to the cell membrane. The polypeptide is UPF0756 membrane protein PM0771 (Pasteurella multocida (strain Pm70)).